The sequence spans 62 residues: Photosystem II reaction center X protein (62 aa).

A helical transmembrane segment spans residues 26–46 (IASFFAAALLIVIPAATFLIF).

This sequence belongs to the PsbX family. Type 2 subfamily. As to quaternary structure, PSII consists of a core antenna complex that captures photons, and an electron transfer chain that converts photonic excitation into a charge separation. PSII forms dimeric complexes.

Its subcellular location is the cellular thylakoid membrane. Its function is as follows. Involved in the binding and/or turnover of quinones at the Q(B) site of Photosystem II. The polypeptide is Photosystem II reaction center X protein (Prochlorococcus marinus (strain MIT 9515)).